The primary structure comprises 274 residues: Homeobox-leucine zipper protein HAT9 (274 aa).

Positions 64–74 (SSHSGVSSFSS) are enriched in low complexity. Residues 64 to 96 (SSHSGVSSFSSGRVVKRERDGGEESPEEEEMTE) form a disordered region. Positions 110–169 (SARKKLRLTKQQSALLEESFKDHSTLNPKQKQVLARQLNLRPRQVEVWFQNRRARTKLKQ) form a DNA-binding region, homeobox. Residues 177–198 (LKKCCETLADENIRLQKEIQEL) form a leucine-zipper region.

This sequence belongs to the HD-ZIP homeobox family. Class II subfamily.

It is found in the nucleus. In terms of biological role, probable transcription factor. The chain is Homeobox-leucine zipper protein HAT9 (HAT9) from Arabidopsis thaliana (Mouse-ear cress).